Consider the following 682-residue polypeptide: Putative L-type lectin-domain containing receptor kinase I.1 (682 aa).

A signal peptide spans 1-19; that stretch reads MAQRLHLLLLLFLICFVNL. Over 20–292 the chain is Extracellular; that stretch reads ISFSSQQDLS…RPKKPEKTSP (273 aa). The tract at residues 27 to 264 is legume-lectin like; it reads DLSFIYNGFN…YQYILGWSFS (238 aa). Residues N60, N130, N187, N210, and N231 are each glycosylated (N-linked (GlcNAc...) asparagine). The chain crosses the membrane as a helical span at residues 293–313; it reads LLIVLLIILAIIVMVVVGGFY. The Cytoplasmic segment spans residues 314–682; it reads LYRRKKYAEV…SHTIIYGDGR (369 aa). Positions 348-622 constitute a Protein kinase domain; that stretch reads FNKDGRLGRG…VQYINRHQRL (275 aa). ATP contacts are provided by residues 354-362 and K376; that span reads LGRGGFGEV. Residue D472 is the Proton acceptor of the active site.

It in the C-terminal section; belongs to the protein kinase superfamily. Ser/Thr protein kinase family. The protein in the N-terminal section; belongs to the leguminous lectin family.

The protein localises to the cell membrane. The enzyme catalyses L-seryl-[protein] + ATP = O-phospho-L-seryl-[protein] + ADP + H(+). It carries out the reaction L-threonyl-[protein] + ATP = O-phospho-L-threonyl-[protein] + ADP + H(+). Its function is as follows. Involved in resistance response to the pathogenic fungus Alternaria brassicicola. This is Putative L-type lectin-domain containing receptor kinase I.1 from Arabidopsis thaliana (Mouse-ear cress).